The following is a 313-amino-acid chain: Serine/threonine-protein phosphatase PP2A-4 catalytic subunit (313 aa).

Residues Asp61, His63, Asp89, and Asn121 each contribute to the Mn(2+) site. The Proton donor role is filled by His122. Residues His171 and His245 each coordinate Mn(2+). Leu313 carries the post-translational modification Leucine methyl ester.

It belongs to the PPP phosphatase family. PP-2A subfamily. In terms of assembly, PP2A consists of a common heterodimeric core enzyme, composed of a 36 kDa catalytic subunit (subunit C) and a 65 kDa constant regulatory subunit (subunit A), that associates with a variety of regulatory subunits such as subunits B (the R2/B/PR55/B55, R3/B''/PR72/PR130/PR59 and R5/B'/B56 families). Interacts with SIC/RON3. Requires Mn(2+) as cofactor. In terms of processing, reversibly methyl esterified on Leu-313 by leucine carboxyl methyltransferase 1 (LCMT1) and pectin methylesterase 1 (PME1). Carboxyl methylation influences the affinity of the catalytic subunit for the different regulatory subunits, thereby modulating the PP2A holoenzyme's substrate specificity, enzyme activity and cellular localization. Phosphorylation of either threonine (by autophosphorylation-activated protein kinase) or tyrosine results in inactivation of the phosphatase. Auto-dephosphorylation has been suggested as a mechanism for reactivation.

It is found in the cytoplasm. The enzyme catalyses O-phospho-L-seryl-[protein] + H2O = L-seryl-[protein] + phosphate. The catalysed reaction is O-phospho-L-threonyl-[protein] + H2O = L-threonyl-[protein] + phosphate. Functions redundantly with PP2A3, and is involved in establishing auxin gradients, apical-basal axis of polarity and root and shoot apical meristem during embryogenesis. May dephosphorylate PIN1 and regulate its subcellular distribution for polar auxin transport. The holoenzyme composed of PP2AA1, PP2A4 and B'ZETA or B'ETA acts as a negative regulator of plant innate immunity by controlling BAK1 phosphorylation state and activation in surface-localized immune receptor complexes. The sequence is that of Serine/threonine-protein phosphatase PP2A-4 catalytic subunit from Arabidopsis thaliana (Mouse-ear cress).